The following is a 36-amino-acid chain: Photosystem I reaction center subunit VIII (36 aa).

A helical transmembrane segment spans residues Phe-10 to Tyr-29.

This sequence belongs to the PsaI family.

It is found in the plastid. The protein resides in the chloroplast thylakoid membrane. In terms of biological role, may help in the organization of the PsaL subunit. This chain is Photosystem I reaction center subunit VIII, found in Oryza nivara (Indian wild rice).